We begin with the raw amino-acid sequence, 552 residues long: uncharacterized protein (552 aa).

Positions 8–200 (KLFADMIIQG…LLCVYEGFLK (193 aa)) constitute a DhaL domain.

This is an uncharacterized protein from Staphylococcus epidermidis (strain ATCC 12228 / FDA PCI 1200).